The following is a 429-amino-acid chain: Arginine biosynthesis bifunctional protein ArgJ (429 aa).

Substrate is bound by residues threonine 181, lysine 207, threonine 218, glutamate 302, asparagine 424, and serine 429. The Nucleophile role is filled by threonine 218.

This sequence belongs to the ArgJ family. As to quaternary structure, heterotetramer of two alpha and two beta chains.

Its subcellular location is the cytoplasm. The enzyme catalyses N(2)-acetyl-L-ornithine + L-glutamate = N-acetyl-L-glutamate + L-ornithine. It carries out the reaction L-glutamate + acetyl-CoA = N-acetyl-L-glutamate + CoA + H(+). The protein operates within amino-acid biosynthesis; L-arginine biosynthesis; L-ornithine and N-acetyl-L-glutamate from L-glutamate and N(2)-acetyl-L-ornithine (cyclic): step 1/1. It functions in the pathway amino-acid biosynthesis; L-arginine biosynthesis; N(2)-acetyl-L-ornithine from L-glutamate: step 1/4. In terms of biological role, catalyzes two activities which are involved in the cyclic version of arginine biosynthesis: the synthesis of N-acetylglutamate from glutamate and acetyl-CoA as the acetyl donor, and of ornithine by transacetylation between N(2)-acetylornithine and glutamate. In Chlorobium chlorochromatii (strain CaD3), this protein is Arginine biosynthesis bifunctional protein ArgJ.